Reading from the N-terminus, the 370-residue chain is Platelet-derived growth factor D (370 aa).

The N-terminal stretch at 1–18 is a signal peptide; the sequence is MHRLIFVCTLVCANFCSC. Positions 52–170 constitute a CUB domain; that stretch reads RDETIQVRGN…PGFKIYYSLL (119 aa). A disulfide bond links C109 and C131. N276 carries an N-linked (GlcNAc...) asparagine glycan. 2 cysteine pairs are disulfide-bonded: C302–C360 and C306–C362.

This sequence belongs to the PDGF/VEGF growth factor family. As to quaternary structure, homodimer; disulfide-linked. Interacts with PDGFRB homodimers, and with heterodimers formed by PDGFRA and PDGFRB. In terms of processing, activated by proteolytic cleavage. Proteolytic removal of the N-terminal CUB domain releasing the core domain is necessary for unmasking the receptor-binding epitopes of the core domain. Cleavage after Arg-247 or Arg-249 by urokinase plasminogen activator gives rise to the active form.

Its subcellular location is the secreted. In terms of biological role, growth factor that plays an essential role in the regulation of embryonic development, cell proliferation, cell migration, survival and chemotaxis. Potent mitogen for cells of mesenchymal origin. Plays an important role in wound healing. Induces macrophage recruitment, increased interstitial pressure, and blood vessel maturation during angiogenesis. Can initiate events that lead to a mesangial proliferative glomerulonephritis, including influx of monocytes and macrophages and production of extracellular matrix. This Pongo abelii (Sumatran orangutan) protein is Platelet-derived growth factor D (PDGFD).